The primary structure comprises 379 residues: NuA4 complex subunit EAF3 homolog (379 aa).

The Tudor-knot domain maps to 6–61 (EENEKVLVHHQNRIYEAKIIKVDPKTSKSDKKKPLYFIHYLGWKEKWNEWIEPNKI). The disordered stretch occupies residues 75-212 (TNIKASTTSL…KRNDSKSSHF (138 aa)). The segment covering 78 to 87 (KASTTSLNNK) has biased composition (low complexity). Over residues 111-141 (ENSDEDENESELEDGGGEDADEGGEDIEDQE) the composition is skewed to acidic residues. Low complexity predominate over residues 165–199 (SSSSSSSSKSNNNNNNNNNNNNNNNNNNNNNNNNN). The MRG domain maps to 214-377 (STKFIDIEIP…ASSPYLKAAS (164 aa)).

In terms of assembly, component of the NuA4 histone acetyltransferase complex.

The protein localises to the nucleus. Component of the NuA4 histone acetyltransferase complex which is involved in transcriptional activation of selected genes principally by acetylation of nucleosomal histone H4 and H2A. The NuA4 complex is also involved in DNA repair. Also a component of a complex which acts to repress transcription by deacetylation of nucleosomal histones. This is NuA4 complex subunit EAF3 homolog from Dictyostelium discoideum (Social amoeba).